A 1029-amino-acid polypeptide reads, in one-letter code: Multidrug resistance protein MdtC (1029 aa).

Transmembrane regions (helical) follow at residues 15–35 (ILLSIAVTLCGVLGFRLLPVA), 333–353 (EVEQSLAISVGLVILVVFLFL), 360–380 (LIPAVAVPVSLIGTFAAMYLC), 387–407 (LSLMALTIATGFVVDDAIVAL), 431–451 (VGFTVLSMSLSLVAVFLPLLL), 469–489 (VAIGISLVVSLTLTPMMCGWL), 528–548 (LVGLVLLATIALNVWLYISIP), 853–873 (VILILAAIATVYIVLGMLYES), 897–917 (AFDAPFSLIALIGIMLLIGIV), 953–973 (PIMMTTLAALFGALPLMIASG), and 984–1004 (ITIVGGLVMSQLLTLYTTPVV).

It belongs to the resistance-nodulation-cell division (RND) (TC 2.A.6) family. MdtC subfamily. As to quaternary structure, part of a tripartite efflux system composed of MdtA, MdtB and MdtC. MdtC forms a heteromultimer with MdtB.

Its subcellular location is the cell inner membrane. The chain is Multidrug resistance protein MdtC from Cronobacter sakazakii (strain ATCC BAA-894) (Enterobacter sakazakii).